A 154-amino-acid polypeptide reads, in one-letter code: MLLYMSQPQEATSPPLHSVSVAGVVVREDGRLLAIRRADNGTWELPGGVLELDETPETGVAREVWEETGIRVEVDELTGVYKNTTRGIVALVFRCKPSGGVERTSSESTAVSWLTPDEVSERMAEVYAIRLLDALDGAGPHVRSHDGKHLIPAG.

A Nudix hydrolase domain is found at 15–136 (PLHSVSVAGV…YAIRLLDALD (122 aa)). 4 residues coordinate Mg(2+): Gly48, Glu63, Glu66, and Glu67. The Nudix box motif lies at 48–69 (GVLELDETPETGVAREVWEETG).

Belongs to the Nudix hydrolase family.

The polypeptide is MutT-like protein (Streptomyces ambofaciens).